The chain runs to 322 residues: MSQRITIDHRSAPALRHPEKAHRPDNPIQRKPSWIRVKAPNHPVYHETRALMRDAGLVTVCEEAACPNIGECWSQRHATMMIMGEICTRACAFCNVTTGLPKHLDEDEPRRVGEAVAKLGLKHVVITSVDRDDLEDGGAMHFARVIHAIRETSPQTTIEILTPDFLRKDGALEVVVAARPDVFNHNIETIPRLYPTIRPGARYYQSVRLLDGVKKLDPSIFTKSGLMLGLGEERMEVAQVMDDFRIADVDFLTLGQYLQPSAKHAAVEKFVTPDEFDGYAAAARSKGFLQVSASPLTRSSYHADSDFAKLQAARNSRLKESL.

A compositionally biased stretch (basic and acidic residues) spans 1 to 25 (MSQRITIDHRSAPALRHPEKAHRPD). The interval 1–29 (MSQRITIDHRSAPALRHPEKAHRPDNPIQ) is disordered. Residues Cys61, Cys66, Cys72, Cys87, Cys91, Cys94, and Ser300 each coordinate [4Fe-4S] cluster. Residues 73-289 (WSQRHATMMI…AAAARSKGFL (217 aa)) enclose the Radical SAM core domain.

Belongs to the radical SAM superfamily. Lipoyl synthase family. Requires [4Fe-4S] cluster as cofactor.

Its subcellular location is the cytoplasm. The enzyme catalyses [[Fe-S] cluster scaffold protein carrying a second [4Fe-4S](2+) cluster] + N(6)-octanoyl-L-lysyl-[protein] + 2 oxidized [2Fe-2S]-[ferredoxin] + 2 S-adenosyl-L-methionine + 4 H(+) = [[Fe-S] cluster scaffold protein] + N(6)-[(R)-dihydrolipoyl]-L-lysyl-[protein] + 4 Fe(3+) + 2 hydrogen sulfide + 2 5'-deoxyadenosine + 2 L-methionine + 2 reduced [2Fe-2S]-[ferredoxin]. Its pathway is protein modification; protein lipoylation via endogenous pathway; protein N(6)-(lipoyl)lysine from octanoyl-[acyl-carrier-protein]: step 2/2. In terms of biological role, catalyzes the radical-mediated insertion of two sulfur atoms into the C-6 and C-8 positions of the octanoyl moiety bound to the lipoyl domains of lipoate-dependent enzymes, thereby converting the octanoylated domains into lipoylated derivatives. The protein is Lipoyl synthase of Gluconobacter oxydans (strain 621H) (Gluconobacter suboxydans).